The following is a 158-amino-acid chain: S-ribosylhomocysteine lyase (158 aa).

The Fe cation site is built by His-57, His-61, and Cys-125.

Belongs to the LuxS family. Homodimer. The cofactor is Fe cation.

It catalyses the reaction S-(5-deoxy-D-ribos-5-yl)-L-homocysteine = (S)-4,5-dihydroxypentane-2,3-dione + L-homocysteine. Its function is as follows. Involved in the synthesis of autoinducer 2 (AI-2) which is secreted by bacteria and is used to communicate both the cell density and the metabolic potential of the environment. The regulation of gene expression in response to changes in cell density is called quorum sensing. Catalyzes the transformation of S-ribosylhomocysteine (RHC) to homocysteine (HC) and 4,5-dihydroxy-2,3-pentadione (DPD). In Deinococcus radiodurans (strain ATCC 13939 / DSM 20539 / JCM 16871 / CCUG 27074 / LMG 4051 / NBRC 15346 / NCIMB 9279 / VKM B-1422 / R1), this protein is S-ribosylhomocysteine lyase.